The primary structure comprises 452 residues: UDP-N-acetylmuramoylalanine--D-glutamate ligase (452 aa).

Position 119-125 (119-125 (GSNGKTT)) interacts with ATP.

This sequence belongs to the MurCDEF family.

It is found in the cytoplasm. It catalyses the reaction UDP-N-acetyl-alpha-D-muramoyl-L-alanine + D-glutamate + ATP = UDP-N-acetyl-alpha-D-muramoyl-L-alanyl-D-glutamate + ADP + phosphate + H(+). Its pathway is cell wall biogenesis; peptidoglycan biosynthesis. Cell wall formation. Catalyzes the addition of glutamate to the nucleotide precursor UDP-N-acetylmuramoyl-L-alanine (UMA). The chain is UDP-N-acetylmuramoylalanine--D-glutamate ligase from Streptococcus pyogenes serotype M2 (strain MGAS10270).